A 448-amino-acid polypeptide reads, in one-letter code: Exodeoxyribonuclease 7 large subunit (448 aa).

The protein belongs to the XseA family. Heterooligomer composed of large and small subunits.

The protein resides in the cytoplasm. The catalysed reaction is Exonucleolytic cleavage in either 5'- to 3'- or 3'- to 5'-direction to yield nucleoside 5'-phosphates.. In terms of biological role, bidirectionally degrades single-stranded DNA into large acid-insoluble oligonucleotides, which are then degraded further into small acid-soluble oligonucleotides. The polypeptide is Exodeoxyribonuclease 7 large subunit (Histophilus somni (strain 129Pt) (Haemophilus somnus)).